A 75-amino-acid polypeptide reads, in one-letter code: Cruzioseptin-6 (75 aa).

A signal peptide spans 1–22; the sequence is MAYLKKSLFLVLFLGLVSLSIC. A propeptide spanning residues 23-43 is cleaved from the precursor; that stretch reads EEEKREEENEEEQEDDDQSEE. Positions 24-44 are disordered; sequence EEKREEENEEEQEDDDQSEEK. Residues 30–41 show a composition bias toward acidic residues; the sequence is ENEEEQEDDDQS.

In terms of tissue distribution, expressed by the skin glands.

It localises to the secreted. Has antimicrobial activity. This is Cruzioseptin-6 from Cruziohyla calcarifer (Splendid leaf frog).